The chain runs to 363 residues: Photosystem II protein D1 1 (363 aa).

A run of 3 helical transmembrane segments spans residues 32–49 (YVGWFGLLMIPSLFVSAI), 121–136 (HFLIAIWTYLGRQWEL), and 145–159 (WIAMAFSAPVAAATA). Residue His-121 coordinates chlorophyll a. Tyr-129 lines the pheophytin a pocket. Positions 173 and 192 each coordinate [CaMn4O5] cluster. The chain crosses the membrane as a helical span at residues 200 to 221 (FHMLGVVGVFGGAFLSAMHGSL). His-201 contributes to the chlorophyll a binding site. Residues His-218 and 268–269 (AF) each bind a quinone. His-218 serves as a coordination point for Fe cation. Residue His-276 participates in Fe cation binding. Residues 278–292 (LLAVLPTIGIWFAAL) traverse the membrane as a helical segment. The [CaMn4O5] cluster site is built by His-336 and Ala-348. A propeptide spanning residues 349–363 (STESKEIPTIPIMTS) is cleaved from the precursor.

This sequence belongs to the reaction center PufL/M/PsbA/D family. In terms of assembly, PSII is composed of 1 copy each of membrane proteins PsbA, PsbB, PsbC, PsbD, PsbE, PsbF, PsbH, PsbI, PsbJ, PsbK, PsbL, PsbM, PsbT, PsbX, PsbY, PsbZ, Psb30/Ycf12, peripheral proteins PsbO, CyanoQ (PsbQ), PsbU, PsbV and a large number of cofactors. It forms dimeric complexes. The cofactor is The D1/D2 heterodimer binds P680, chlorophylls that are the primary electron donor of PSII, and subsequent electron acceptors. It shares a non-heme iron and each subunit binds pheophytin, quinone, additional chlorophylls, carotenoids and lipids. D1 provides most of the ligands for the Mn4-Ca-O5 cluster of the oxygen-evolving complex (OEC). There is also a Cl(-1) ion associated with D1 and D2, which is required for oxygen evolution. The PSII complex binds additional chlorophylls, carotenoids and specific lipids.. In terms of processing, tyr-164 forms a radical intermediate that is referred to as redox-active TyrZ, YZ or Y-Z. C-terminally processed by CtpA; processing is essential to allow assembly of the oxygen-evolving complex and thus photosynthetic growth.

It is found in the cellular thylakoid membrane. The catalysed reaction is 2 a plastoquinone + 4 hnu + 2 H2O = 2 a plastoquinol + O2. Its function is as follows. Photosystem II (PSII) is a light-driven water:plastoquinone oxidoreductase that uses light energy to abstract electrons from H(2)O, generating O(2) and a proton gradient subsequently used for ATP formation. It consists of a core antenna complex that captures photons, and an electron transfer chain that converts photonic excitation into a charge separation. The D1/D2 (PsbA/PsbD) reaction center heterodimer binds P680, the primary electron donor of PSII as well as several subsequent electron acceptors. The protein is Photosystem II protein D1 1 of Acaryochloris marina (strain MBIC 11017).